We begin with the raw amino-acid sequence, 177 residues long: uncharacterized protein (177 aa).

A run of 4 helical transmembrane segments spans residues Ile-4–Leu-24, Ile-33–Ile-53, Ile-80–Leu-100, and Met-115–Val-135.

Its subcellular location is the cell membrane. This is an uncharacterized protein from Bacillus subtilis (strain 168).